The following is a 664-amino-acid chain: MAAYLISFIWVSVILAQKSMGHSLFACEPITLRMCQDLPYNSTFMPNLLNHYDQQTAALAMEPFHPMVNLECSRDLRPFLCALYTPVCMEYGRMTLPCRKLCQRAYNECFKLMEMFGVPWPEEMECSRFPDCDEPYPRIVDISLSGEPSEETPLAVQRDYGFWCPRELKIDPDLRSSFLGVRDCSPPCPHMYFRREELSFARYFIGVISIVCLSATLFTFLTFLIDVTRFRYPERPIIFYAVCYMMVSLIFFIGFLLEDKVACNGANPSQYKASTVTQGSHNKACTMLFMVLYFFTMAGSVWWVILTITWFLAAVPKWGSEAIEKKALLFHASAWGIPGTLTIILLAMNKIEGDNISGVCFVGLYDVHALRYFVLAPLCLDVVVGVSLLLAGIISLNRVRIEIPLEKENQDKLVKFMIRIGVFSILYLVPLLVVIGCYFYEQAYRGVWETTWVQERCREYHIPCPYKVTQTSRPDLILFLMKYLMLLVVGIPSVFWVGSKKTCFEWASFFHGRKKKAGVNESRQVLQEPDFAQSLLRDPNTPIVRKSRGTSTQGTSTHASSTQLAMLDDQRSKAGSVQSKVSSYHGSLHRSRDGRYTPCSYRGIEERLPHGSMSHLTDHSRHSSTHRLNEQSHQGSIRDLSNPLAHISHGTSMNRVIEADATSA.

An N-terminal signal peptide occupies residues 1-16 (MAAYLISFIWVSVILA). At 17–204 (QKSMGHSLFA…REELSFARYF (188 aa)) the chain is on the extracellular side. The FZ domain occupies 22 to 135 (HSLFACEPIT…CSRFPDCDEP (114 aa)). 5 disulfides stabilise this stretch: cysteine 27/cysteine 88, cysteine 35/cysteine 81, cysteine 72/cysteine 109, cysteine 98/cysteine 132, and cysteine 102/cysteine 126. Asparagine 41 carries N-linked (GlcNAc...) asparagine glycosylation. The helical transmembrane segment at 205–225 (IGVISIVCLSATLFTFLTFLI) threads the bilayer. The Cytoplasmic segment spans residues 226–236 (DVTRFRYPERP). Residues 237-257 (IIFYAVCYMMVSLIFFIGFLL) form a helical membrane-spanning segment. Over 258-287 (EDKVACNGANPSQYKASTVTQGSHNKACTM) the chain is Extracellular. A helical transmembrane segment spans residues 288-308 (LFMVLYFFTMAGSVWWVILTI). Topologically, residues 309–327 (TWFLAAVPKWGSEAIEKKA) are cytoplasmic. Residues 328-348 (LLFHASAWGIPGTLTIILLAM) form a helical membrane-spanning segment. At 349–373 (NKIEGDNISGVCFVGLYDVHALRYF) the chain is on the extracellular side. The N-linked (GlcNAc...) asparagine glycan is linked to asparagine 355. A helical membrane pass occupies residues 374-394 (VLAPLCLDVVVGVSLLLAGII). Over 395–419 (SLNRVRIEIPLEKENQDKLVKFMIR) the chain is Cytoplasmic. Residues 420 to 440 (IGVFSILYLVPLLVVIGCYFY) traverse the membrane as a helical segment. At 441–476 (EQAYRGVWETTWVQERCREYHIPCPYKVTQTSRPDL) the chain is on the extracellular side. Residues 477–497 (ILFLMKYLMLLVVGIPSVFWV) traverse the membrane as a helical segment. The Cytoplasmic segment spans residues 498 to 664 (GSKKTCFEWA…RVIEADATSA (167 aa)). The short motif at 501-506 (KTCFEW) is the Lys-Thr-X-X-X-Trp motif, mediates interaction with the PDZ domain of Dvl family members element. A disordered region spans residues 537 to 664 (RDPNTPIVRK…RVIEADATSA (128 aa)). 2 stretches are compositionally biased toward polar residues: residues 549-564 (GTST…STQL) and 573-585 (KAGS…SSYH).

This sequence belongs to the G-protein coupled receptor Fz/Smo family. As to expression, expression restricted to the early nervous system.

It localises to the membrane. Its subcellular location is the cell membrane. The protein localises to the cell surface. It is found in the apical cell membrane. Its function is as follows. Receptor for Wnt proteins. Most of frizzled receptors are coupled to the beta-catenin canonical signaling pathway, which leads to the activation of disheveled proteins, inhibition of GSK-3 kinase, nuclear accumulation of beta-catenin and activation of Wnt target genes. A second signaling pathway involving PKC and calcium fluxes has been seen for some family members, but it is not yet clear if it represents a distinct pathway or if it can be integrated in the canonical pathway, as PKC seems to be required for Wnt-mediated inactivation of GSK-3 kinase. Both pathways seem to involve interactions with G-proteins. Activated by Wnt8. Involved in transduction and intercellular transmission of polarity information during tissue morphogenesis and/or in differentiated tissues. Plays a role in controlling early axon growth and guidance processes necessary for the formation of a subset of central and peripheral major fiber tracts. Involved in the migration of cranial neural crest cells. May also be implicated in the transmission of sensory information from the trunk and limbs to the brain. Controls commissural sensory axons guidance after midline crossing along the anterior-posterior axis in the developing spinal cord in a Wnt-dependent signaling pathway. Together with FZD6, is involved in the neural tube closure and plays a role in the regulation of the establishment of planar cell polarity (PCP). Promotes neurogenesis by maintaining sympathetic neuroblasts within the cell cycle in a beta-catenin-dependent manner. The polypeptide is Frizzled-3 (fzd3) (Xenopus laevis (African clawed frog)).